Here is a 239-residue protein sequence, read N- to C-terminus: DNA repair protein RecO (239 aa).

This sequence belongs to the RecO family.

Involved in DNA repair and RecF pathway recombination. This chain is DNA repair protein RecO, found in Glaesserella parasuis serovar 5 (strain SH0165) (Haemophilus parasuis).